The sequence spans 302 residues: Probable lipid kinase YegS-like (302 aa).

The DAGKc domain occupies 1 to 129; it reads MDKDKVLLVL…IDLGEVNGKL (129 aa). Residues Thr-39, 65 to 71, and Thr-92 each bind ATP; that span reads GDGTLRE. Residues Arg-210, Asp-213, and Leu-215 each coordinate Mg(2+). Glu-268 functions as the Proton acceptor in the catalytic mechanism.

The protein belongs to the diacylglycerol/lipid kinase family. YegS lipid kinase subfamily. Mg(2+) is required as a cofactor. The cofactor is Ca(2+).

The protein localises to the cytoplasm. In terms of biological role, probably phosphorylates lipids; the in vivo substrate is unknown. This is Probable lipid kinase YegS-like from Pseudomonas aeruginosa (strain ATCC 15692 / DSM 22644 / CIP 104116 / JCM 14847 / LMG 12228 / 1C / PRS 101 / PAO1).